The sequence spans 189 residues: GMP synthase [glutamine-hydrolyzing] subunit A (189 aa).

The Glutamine amidotransferase type-1 domain maps to 1–189; it reads MIVILNNGGQ…CKVCGFKFNE (189 aa). Catalysis depends on Cys76, which acts as the Nucleophile. Active-site residues include His163 and Glu165.

Heterodimer composed of a glutamine amidotransferase subunit (A) and a GMP-binding subunit (B).

It carries out the reaction XMP + L-glutamine + ATP + H2O = GMP + L-glutamate + AMP + diphosphate + 2 H(+). It participates in purine metabolism; GMP biosynthesis; GMP from XMP (L-Gln route): step 1/1. Catalyzes the synthesis of GMP from XMP. The chain is GMP synthase [glutamine-hydrolyzing] subunit A from Methanococcus vannielii (strain ATCC 35089 / DSM 1224 / JCM 13029 / OCM 148 / SB).